The sequence spans 320 residues: Nucleoporin Nup37 (320 aa).

4 WD repeats span residues 67–113, 118–157, 160–200, and 203–242; these read KEQR…FTSL, GHGD…ENVI, GLSS…TVIS, and SPKF…VPAD.

The protein localises to the nucleus. It localises to the nuclear pore complex. Functionally, as part of the nuclear pore complex (NPC), has a role in its assembly and function. (Microbial infection) Required for optimal replication of E.chaffeensis. This chain is Nucleoporin Nup37, found in Drosophila melanogaster (Fruit fly).